Here is a 509-residue protein sequence, read N- to C-terminus: Maturase K (509 aa).

Belongs to the intron maturase 2 family. MatK subfamily.

It localises to the plastid. It is found in the chloroplast. Its function is as follows. Usually encoded in the trnK tRNA gene intron. Probably assists in splicing its own and other chloroplast group II introns. This Clematis lasiantha (Pipestem clematis) protein is Maturase K.